A 40-amino-acid polypeptide reads, in one-letter code: Large ribosomal subunit protein bL36 (40 aa).

This sequence belongs to the bacterial ribosomal protein bL36 family.

The sequence is that of Large ribosomal subunit protein bL36 from Corynebacterium aurimucosum (strain ATCC 700975 / DSM 44827 / CIP 107346 / CN-1) (Corynebacterium nigricans).